We begin with the raw amino-acid sequence, 327 residues long: Interleukin-12 subunit beta (327 aa).

A signal peptide spans 1–22; sequence MHPQQLVVSWFSLVLLASPIVA. In terms of domain architecture, Ig-like C2-type spans 23–106; that stretch reads IWELEKNVYV…LSRSLLLLHK (84 aa). Cys-50 and Cys-90 are oxidised to a cystine. Asn-223 carries an N-linked (GlcNAc...) asparagine glycan. One can recognise a Fibronectin type-III domain in the interval 238–327; the sequence is PPKNLQLRPL…WSEWASVSCS (90 aa).

Belongs to the IL-12B family. As to quaternary structure, heterodimer with IL12A; disulfide-linked. The heterodimer is known as interleukin IL-12. Heterodimer with IL23A; disulfide-linked. The heterodimer is known as interleukin IL-23. Also secreted as a monomer. Interacts with NBR1; this interaction promotes IL-12 secretion.

Its subcellular location is the secreted. Its function is as follows. Cytokine that can act as a growth factor for activated T and NK cells, enhance the lytic activity of NK/lymphokine-activated killer cells, and stimulate the production of IFN-gamma by resting PBMC. In terms of biological role, associates with IL23A to form the IL-23 interleukin, a heterodimeric cytokine which functions in innate and adaptive immunity. IL-23 may constitute with IL-17 an acute response to infection in peripheral tissues. IL-23 binds to a heterodimeric receptor complex composed of IL12RB1 and IL23R, activates the Jak-Stat signaling cascade, stimulates memory rather than naive T-cells and promotes production of pro-inflammatory cytokines. IL-23 induces autoimmune inflammation and thus may be responsible for autoimmune inflammatory diseases and may be important for tumorigenesis. The protein is Interleukin-12 subunit beta (IL12B) of Capra hircus (Goat).